The sequence spans 196 residues: Holliday junction branch migration complex subunit RuvA (196 aa).

Positions 1–63 are domain I; it reads MIEYIKGEIV…EDAHLLFGFA (63 aa). Positions 64–142 are domain II; it reads EKIERELFLL…PMESMAGNLP (79 aa). The flexible linker stretch occupies residues 142-146; that stretch reads PEASV. Positions 147–196 are domain III; sequence SNGAVTEEAVAALVMLGFQKAASQKAVSAILKGSPTLAVEQVIKTALRML.

This sequence belongs to the RuvA family. In terms of assembly, homotetramer. Forms an RuvA(8)-RuvB(12)-Holliday junction (HJ) complex. HJ DNA is sandwiched between 2 RuvA tetramers; dsDNA enters through RuvA and exits via RuvB. An RuvB hexamer assembles on each DNA strand where it exits the tetramer. Each RuvB hexamer is contacted by two RuvA subunits (via domain III) on 2 adjacent RuvB subunits; this complex drives branch migration. In the full resolvosome a probable DNA-RuvA(4)-RuvB(12)-RuvC(2) complex forms which resolves the HJ.

It localises to the cytoplasm. Functionally, the RuvA-RuvB-RuvC complex processes Holliday junction (HJ) DNA during genetic recombination and DNA repair, while the RuvA-RuvB complex plays an important role in the rescue of blocked DNA replication forks via replication fork reversal (RFR). RuvA specifically binds to HJ cruciform DNA, conferring on it an open structure. The RuvB hexamer acts as an ATP-dependent pump, pulling dsDNA into and through the RuvAB complex. HJ branch migration allows RuvC to scan DNA until it finds its consensus sequence, where it cleaves and resolves the cruciform DNA. The chain is Holliday junction branch migration complex subunit RuvA from Parabacteroides distasonis (strain ATCC 8503 / DSM 20701 / CIP 104284 / JCM 5825 / NCTC 11152).